The sequence spans 66 residues: Protein translocase subunit SecE (66 aa).

The chain crosses the membrane as a helical span at residues 29–49 (LIASTLVVVAAVFIFSLICLV).

It belongs to the SecE/SEC61-gamma family. In terms of assembly, component of the Sec protein translocase complex. Heterotrimer consisting of SecY, SecE and SecG subunits. The heterotrimers can form oligomers, although 1 heterotrimer is thought to be able to translocate proteins. Interacts with the ribosome. Interacts with SecDF, and other proteins may be involved. Interacts with SecA.

The protein localises to the cell inner membrane. Functionally, essential subunit of the Sec protein translocation channel SecYEG. Clamps together the 2 halves of SecY. May contact the channel plug during translocation. This is Protein translocase subunit SecE from Rickettsia typhi (strain ATCC VR-144 / Wilmington).